Reading from the N-terminus, the 215-residue chain is Cytochrome b6 (215 aa).

The helical transmembrane segment at 32 to 52 threads the bilayer; that stretch reads IFYCLGGITLTCFLIQFATGF. Position 35 (cysteine 35) interacts with heme c. Heme b contacts are provided by histidine 86 and histidine 100. The next 3 helical transmembrane spans lie at 90 to 110, 116 to 136, and 186 to 206; these read ASMM…TGGF, LTWV…VTGY, and LHTF…FLMI. Positions 187 and 202 each coordinate heme b.

The protein belongs to the cytochrome b family. PetB subfamily. In terms of assembly, the 4 large subunits of the cytochrome b6-f complex are cytochrome b6, subunit IV (17 kDa polypeptide, PetD), cytochrome f and the Rieske protein, while the 4 small subunits are PetG, PetL, PetM and PetN. The complex functions as a dimer. Requires heme b as cofactor. Heme c is required as a cofactor.

It is found in the cellular thylakoid membrane. Functionally, component of the cytochrome b6-f complex, which mediates electron transfer between photosystem II (PSII) and photosystem I (PSI), cyclic electron flow around PSI, and state transitions. The polypeptide is Cytochrome b6 (Synechococcus elongatus).